We begin with the raw amino-acid sequence, 114 residues long: T cell receptor beta variable 4-2 (114 aa).

A signal peptide spans 1–21 (MGCRLLCCAVLCLLGAVPMET). In terms of domain architecture, Ig-like spans 22 to 114 (GVTQTPRHLV…SALYLCASSQ (93 aa)). Cysteine 42 and cysteine 110 are joined by a disulfide. N-linked (GlcNAc...) asparagine glycosylation is found at asparagine 76 and asparagine 89.

Alpha-beta TR is a heterodimer composed of an alpha and beta chain; disulfide-linked. The alpha-beta TR is associated with the transmembrane signaling CD3 coreceptor proteins to form the TR-CD3 (TcR or TCR). The assembly of alpha-beta TR heterodimers with CD3 occurs in the endoplasmic reticulum where a single alpha-beta TR heterodimer associates with one CD3D-CD3E heterodimer, one CD3G-CD3E heterodimer and one CD247 homodimer forming a stable octameric structure. CD3D-CD3E and CD3G-CD3E heterodimers preferentially associate with TR alpha and TR beta chains, respectively. The association of the CD247 homodimer is the last step of TcR assembly in the endoplasmic reticulum and is required for transport to the cell surface.

It is found in the cell membrane. In terms of biological role, v region of the variable domain of T cell receptor (TR) beta chain that participates in the antigen recognition. Alpha-beta T cell receptors are antigen specific receptors which are essential to the immune response and are present on the cell surface of T lymphocytes. Recognize peptide-major histocompatibility (MH) (pMH) complexes that are displayed by antigen presenting cells (APC), a prerequisite for efficient T cell adaptive immunity against pathogens. Binding of alpha-beta TR to pMH complex initiates TR-CD3 clustering on the cell surface and intracellular activation of LCK that phosphorylates the ITAM motifs of CD3G, CD3D, CD3E and CD247 enabling the recruitment of ZAP70. In turn ZAP70 phosphorylates LAT, which recruits numerous signaling molecules to form the LAT signalosome. The LAT signalosome propagates signal branching to three major signaling pathways, the calcium, the mitogen-activated protein kinase (MAPK) kinase and the nuclear factor NF-kappa-B (NF-kB) pathways, leading to the mobilization of transcription factors that are critical for gene expression and essential for T cell growth and differentiation. The T cell repertoire is generated in the thymus, by V-(D)-J rearrangement. This repertoire is then shaped by intrathymic selection events to generate a peripheral T cell pool of self-MH restricted, non-autoaggressive T cells. Post-thymic interaction of alpha-beta TR with the pMH complexes shapes TR structural and functional avidity. The chain is T cell receptor beta variable 4-2 from Homo sapiens (Human).